We begin with the raw amino-acid sequence, 1082 residues long: MSGNMDEAVSGNMDEAVSAGKDVRIARWVATIAGLLGFVLSVSIPLLPVTQTTATLNWPQQGRLDNVTAPLISQAPLELTATVPCSVVRDLPPEGGLVFGTAPAEGRDAALNAMLVNVTETRVDVIVRNVVVASVNRDRVAGPDCQRIEITSNLDGTYADFVGLTQISGEDAGKLQRTGYPDPNLRPAIVGVFTDLTGPAPQGLSVSAEIDTRFTTHPTALKLAAMLLAIVSTVIALLALWRLDRLDGRRMHRLIPTRWRTVTAVDGVVVGGMAIWYVIGANSSDDGYILQMARTAEHAGYMANYFRWFGSPEDPFGWYYNVLALMTKVSDASIWIRLPDLICALICWLLLSREVLPRLGPAVAGSRAAMWAAGLVLLGAWMPFNNGLRPEGQIATGALITYVLIERAVTSGRLTPAALAITTAAFTLGIQPTGLIAVAALLAGGRPILRIVIRRRRLDGTWPLIAPLLAAGTVILAVVFADQTIATVLEATRIRTAIGPSQEWWTEKLRYYYLILPTTDGAISRRVAFVFTAMCLFPSLFMMLRRKHIAGVARGPAWRLMGIIFATMFFLMFTPTKWTHHFGLFAAVGGAMAALATVLVSPTVLRSARNRMAFLSLVLFVLAFCFASTNGWWYVSNFGAPFNNSVPKVGGVQISAIFFALSAIAALWAFWLHLTRRTESRVVDRLTAAPIPVAAGFMVVVMMASMAIGVVRQYPTYSNGWANIRAFAGGCGLADDVLVEPDSNAGFLTPLPGAYGPLGPLGGEDPQGFSPDGVPDRIIAEAIRLNNPQPGTDYDWNRPIKLDEPGINGSTVPLPYGLDPKRVPVAGTYSTEAQQESRLSSAWYELPARDETERAAHPLVVITAAGTITGESVANGLTTGQTVDLEYATRGPDGTLVPAGRVTPYDVGPTPSWRNLRYPRSEIPDDAVAVRVVAEDLSLSQGDWIAVTPPRVPELQSVQEYVGSDQPVLMDWAVGLAFPCQQPMLHANGVTEVPKFRISPDYYAKLQSTDTWQDGINGGLLGITDLLLRASVMSTYLSQDWGQDWGSLRKFDTVVEATPAELDFGSQTHSGLYSPGPLRIRP.

The next 13 helical transmembrane spans lie at 28 to 50 (WVAT…LPVT), 223 to 241 (LAAM…LALW), 262 to 281 (VTAV…VIGA), 333 to 352 (SIWI…LLLS), 359 to 381 (LGPA…LGAW), 420 to 442 (AITT…AALL), 462 to 481 (WPLI…VVFA), 522 to 544 (AISR…FMML), 557 to 574 (AWRL…LMFT), 578 to 600 (WTHH…TVLV), 613 to 635 (AFLS…WWYV), 650 to 672 (GGVQ…AFWL), and 689 to 711 (APIP…IGVV).

The protein belongs to the emb family.

Its subcellular location is the cell membrane. Arabinosyl transferase responsible for the polymerization of arabinose into the arabinan of arabinogalactan. The protein is Probable arabinosyltransferase B (embB) of Mycolicibacterium smegmatis (Mycobacterium smegmatis).